The following is a 390-amino-acid chain: RNA-binding motif protein, X chromosome (390 aa).

An N-acetylmethionine; in Heterogeneous nuclear ribonucleoprotein G; alternate modification is found at methionine 1. An N-acetylvaline; in Heterogeneous nuclear ribonucleoprotein G, N-terminally processed modification is found at valine 2. Residues 8 to 86 (GKLFIGGLNT…KAIKVEQATK (79 aa)) form the RRM domain. A Glycyl lysine isopeptide (Lys-Gly) (interchain with G-Cter in SUMO2) cross-link involves residue lysine 22. N6-acetyllysine is present on lysine 30. The tract at residues 58-390 (SPADAKDAAR…RSDRGGRSRY (333 aa)) is disordered. The span at 60-80 (ADAKDAARDMNGKSLDGKAIK) shows a compositional bias: basic and acidic residues. Glycyl lysine isopeptide (Lys-Gly) (interchain with G-Cter in SUMO2) cross-links involve residues lysine 80 and lysine 86. Serine 88 and serine 91 each carry phosphoserine. A compositionally biased stretch (gly residues) spans 109 to 120 (LRGGRGGSGGTR). Residues arginine 125, arginine 144, and arginine 164 each carry the omega-N-methylarginine modification. Over residues 151-164 (RGPPPRSGGPPPKR) the composition is skewed to pro residues. Position 165 is a phosphoserine (serine 165). Omega-N-methylarginine is present on arginine 172. Phosphoserine is present on serine 174. Composition is skewed to basic and acidic residues over residues 194-215 (PRRE…DGYS) and 241-274 (YTYR…DYSD). 4 positions are modified to phosphoserine: serine 261, serine 329, serine 330, and serine 332. Positions 323 to 337 (SRDSYTSSRSDLYSS) are enriched in low complexity. A compositionally biased stretch (basic and acidic residues) spans 338–347 (GRDRVGRQER). Serine 352 carries the phosphoserine modification. Residues 362–371 (DSYSSSSRGA) are compositionally biased toward low complexity. Over residues 380–390 (SRSDRGGRSRY) the composition is skewed to basic and acidic residues.

In terms of assembly, homomultimer. Found in the supraspliceosome complex Identified in the spliceosome C complex. Interacts with KHDRBS3. Forms a complex with ILF2, ILF3, YLPM1, KHDRBS1, NCOA5 and PPP1CA. Interacts with SAFB/SAFB1. Interacts with ERAP1; the interaction is RNA-independent. Interacts with CLK2, KHDRBS2, SAFB, TRA2B and YTHDC1. Interacts with PPIA/CYPA. In terms of processing, O-glycosylated. Arg-182 is dimethylated, probably to asymmetric dimethylarginine. Expressed in brain, spleen, lung, liver, kidney, testis and heart. Weakly expressed in skeletal muscle (at protein level).

The protein localises to the nucleus. Its function is as follows. RNA-binding protein that plays several role in the regulation of pre- and post-transcriptional processes. Implicated in tissue-specific regulation of gene transcription and alternative splicing of several pre-mRNAs. Binds to and stimulates transcription from the tumor suppressor TXNIP gene promoter; may thus be involved in tumor suppression. When associated with SAFB, binds to and stimulates transcription from the SREBF1 promoter. Associates with nascent mRNAs transcribed by RNA polymerase II. Component of the supraspliceosome complex that regulates pre-mRNA alternative splice site selection. Can either activate or suppress exon inclusion; acts additively with TRA2B to promote exon 7 inclusion of the survival motor neuron SMN. Represses the splicing of MAPT/Tau exon 10. Binds preferentially to single-stranded 5'-CC[A/C]-rich RNA sequence motifs localized in a single-stranded conformation; probably binds RNA as a homodimer. Binds non-specifically to pre-mRNAs. Also plays a role in the cytoplasmic TNFR1 trafficking pathways; promotes both the IL-1-beta-mediated inducible proteolytic cleavage of TNFR1 ectodomains and the release of TNFR1 exosome-like vesicles to the extracellular compartment. This Rattus norvegicus (Rat) protein is RNA-binding motif protein, X chromosome (Rbmx).